Consider the following 620-residue polypeptide: 1-deoxy-D-xylulose-5-phosphate synthase (620 aa).

Residues histidine 80 and 121 to 123 (GHS) each bind thiamine diphosphate. Aspartate 152 lines the Mg(2+) pocket. Thiamine diphosphate is bound by residues 153–154 (GA), asparagine 181, tyrosine 288, and glutamate 370. Position 181 (asparagine 181) interacts with Mg(2+).

It belongs to the transketolase family. DXPS subfamily. As to quaternary structure, homodimer. Requires Mg(2+) as cofactor. Thiamine diphosphate is required as a cofactor.

The enzyme catalyses D-glyceraldehyde 3-phosphate + pyruvate + H(+) = 1-deoxy-D-xylulose 5-phosphate + CO2. The protein operates within metabolic intermediate biosynthesis; 1-deoxy-D-xylulose 5-phosphate biosynthesis; 1-deoxy-D-xylulose 5-phosphate from D-glyceraldehyde 3-phosphate and pyruvate: step 1/1. Its function is as follows. Catalyzes the acyloin condensation reaction between C atoms 2 and 3 of pyruvate and glyceraldehyde 3-phosphate to yield 1-deoxy-D-xylulose-5-phosphate (DXP). The protein is 1-deoxy-D-xylulose-5-phosphate synthase of Cronobacter sakazakii (strain ATCC BAA-894) (Enterobacter sakazakii).